The following is a 695-amino-acid chain: Probable glucan endo-1,3-beta-glucosidase btgC (695 aa).

Disordered regions lie at residues 1–53 (MSGP…THHG), 117–140 (RRGT…GSDN), 175–258 (GPAG…RSQA), and 286–314 (ETSY…STGS). At 1-317 (MSGPHRTFSF…PKPSTGSRKR (317 aa)) the chain is on the cytoplasmic side. Polar residues predominate over residues 36–45 (PISNMSSSPG). The segment covering 188–198 (HLGTSNSSQRN) has biased composition (polar residues). The segment covering 231-241 (NPEEIADDGDD) has biased composition (acidic residues). A helical; Signal-anchor for type II membrane protein transmembrane segment spans residues 318-338 (GWIIGAILAVIIIGAIVGGAV). At 339–695 (GGTIGHKDSG…IPDCGGKTAA (357 aa)) the chain is on the extracellular side. Residues 346-372 (DSGDSASGSSASTQSASGDTDTNGDLD) form a disordered region. Positions 349–366 (DSASGSSASTQSASGDTD) are enriched in low complexity. N-linked (GlcNAc...) asparagine glycosylation is found at Asn-415, Asn-438, and Asn-466. Glu-498 serves as the catalytic Proton donor. Catalysis depends on Glu-597, which acts as the Nucleophile. Residue Asn-642 is glycosylated (N-linked (GlcNAc...) asparagine).

Belongs to the glycosyl hydrolase 17 family.

Its subcellular location is the cell membrane. It carries out the reaction Hydrolysis of (1-&gt;3)-beta-D-glucosidic linkages in (1-&gt;3)-beta-D-glucans.. Its function is as follows. Glucanases play a role in cell expansion during growth, in cell-cell fusion during mating, and in spore release during sporulation. This enzyme may be involved in beta-glucan degradation. Active on laminarin and lichenan. The sequence is that of Probable glucan endo-1,3-beta-glucosidase btgC (btgC) from Aspergillus clavatus (strain ATCC 1007 / CBS 513.65 / DSM 816 / NCTC 3887 / NRRL 1 / QM 1276 / 107).